Consider the following 373-residue polypeptide: Indole glucosinolate O-methyltransferase 2 (373 aa).

S-adenosyl-L-homocysteine is bound by residues Gly-217, Asp-240, Asp-260, Met-261, and Lys-274. His-278 serves as the catalytic Proton acceptor.

The protein belongs to the class I-like SAM-binding methyltransferase superfamily. Cation-independent O-methyltransferase family.

Its pathway is secondary metabolite biosynthesis. Involved in indole glucosinolate biosynthesis. Catalyzes methoxylation reactions of the glucosinolate indole ring. Converts the hydroxy intermediates 4-hydroxy-indol-3-yl-methylglucosinolate (4OH-I3M) and 1-hydroxy-indol-3-yl-methylglucosinolate (1OH-I3M) to 4-methoxy-indol-3-yl-methylglucosinolate (4MO-I3M) and 1-methoxy-indol-3-yl-methylglucosinolate (1MO-I3M), respectively. The polypeptide is Indole glucosinolate O-methyltransferase 2 (Arabidopsis thaliana (Mouse-ear cress)).